The chain runs to 401 residues: Renin-2 (401 aa).

Positions 1–25 (MDRRRMPLWALLLLWSPCTFSLPTG) are cleaved as a signal peptide. The propeptide at 26-63 (TTFERIPLKKMPSVREILEERGVDMTRLSAEWDVFTKR) is activation peptide. One can recognise a Peptidase A1 domain in the interval 83-398 (YYGEIGIGTP…DRHNNRIGFA (316 aa)). Aspartate 101 is a catalytic residue. 2 cysteine pairs are disulfide-bonded: cysteine 114–cysteine 121 and cysteine 277–cysteine 281. Residue aspartate 286 is part of the active site. Cysteine 320 and cysteine 357 are oxidised to a cystine.

The protein belongs to the peptidase A1 family. In terms of assembly, dimer of a heavy chain and a light chain joined by a disulfide bond. In terms of tissue distribution, submandibular gland.

The protein localises to the secreted. The catalysed reaction is Cleavage of Leu-|-Xaa bond in angiotensinogen to generate angiotensin I.. Its function is as follows. Renin is a highly specific endopeptidase, related to pepsin, whose only known function is to generate angiotensin I from angiotensinogen in the plasma, initiating a cascade of reactions that produce an elevation of blood pressure and increased sodium retention by the kidney. The protein is Renin-2 of Mus musculus (Mouse).